The following is a 444-amino-acid chain: Probable glycine dehydrogenase (decarboxylating) subunit 1 (444 aa).

It belongs to the GcvP family. N-terminal subunit subfamily. In terms of assembly, the glycine cleavage system is composed of four proteins: P, T, L and H. In this organism, the P 'protein' is a heterodimer of two subunits.

The catalysed reaction is N(6)-[(R)-lipoyl]-L-lysyl-[glycine-cleavage complex H protein] + glycine + H(+) = N(6)-[(R)-S(8)-aminomethyldihydrolipoyl]-L-lysyl-[glycine-cleavage complex H protein] + CO2. The glycine cleavage system catalyzes the degradation of glycine. The P protein binds the alpha-amino group of glycine through its pyridoxal phosphate cofactor; CO(2) is released and the remaining methylamine moiety is then transferred to the lipoamide cofactor of the H protein. The sequence is that of Probable glycine dehydrogenase (decarboxylating) subunit 1 from Chlorobium phaeobacteroides (strain DSM 266 / SMG 266 / 2430).